The following is an 830-amino-acid chain: Post-transcriptional regulator MKT1 (830 aa).

Lys4 participates in a covalent cross-link: Glycyl lysine isopeptide (Lys-Gly) (interchain with G-Cter in ubiquitin). The tract at residues 130 to 380 (RSRGWTQWNN…SPATTVTKNA (251 aa)) is interaction with PBP1. The tract at residues 347–400 (DSEKNNKDGKKSNLSSPSSASSSASPATTVTKNASEKLTYEKSSTKEVRKPRDI) is disordered. Ser358, Ser362, and Ser371 each carry phosphoserine. Low complexity predominate over residues 361–373 (SSPSSASSSASPA). Positions 380–400 (ASEKLTYEKSSTKEVRKPRDI) are enriched in basic and acidic residues.

This sequence belongs to the XPG/RAD2 endonuclease family. As to quaternary structure, interacts (via C-terminus) with PBP1 (via C-terminus).

It is found in the cytoplasm. Its subcellular location is the cytosol. Functionally, involved in 3'-UTR mediated RNA regulation. Binds to RNA-binding and RNA regulatory proteins. Complexes with PAB1-binding protein to promote mRNA interactions with poly(A)-binding protein. Promotes mating-type switching in mother cells by positively regulating HO expression. In Saccharomyces cerevisiae (strain ATCC 204508 / S288c) (Baker's yeast), this protein is Post-transcriptional regulator MKT1 (MKT1).